We begin with the raw amino-acid sequence, 292 residues long: Tetratricopeptide repeat protein 1 (292 aa).

Positions 23–125 (TQEAECAGPP…STRLKEEGNE (103 aa)) are disordered. Composition is skewed to basic and acidic residues over residues 45-55 (LLRDDEAHLQE) and 75-85 (GADKVENKSNE). Ser-83 and Ser-90 each carry phosphoserine. The segment covering 99-125 (ELEKNMSDEEKQKRREESTRLKEEGNE) has biased composition (basic and acidic residues). TPR repeat units follow at residues 116-149 (STRL…CPSC), 155-188 (SILF…NPSY), and 189-222 (IRAI…DPSI).

In terms of assembly, interacts with the GAP domain of NF1. Interacts (via TPR repeats) with HSP90AA1 and HSPA8.

The protein is Tetratricopeptide repeat protein 1 (TTC1) of Homo sapiens (Human).